The sequence spans 431 residues: MTQTTASVNTQSLGELDPELAAAMAGELARERDTLEMIASENFVPRAVLQAQGSVLTNKYAEGYPGRRYYGGCENVDVVENLARERAKELFGAEFANVQPHSGAQANAAVLMSLMDPGDRLLGLDLAHGGHLTHGMRLNFSGKLYEVHSYGVSKEDHRVDMDEVRTIALGAKPKVIVAGWSAYPRHQDFAAFRAIADEVGAYLWVDMAHFAGLVAAGLHPSPVPYADVVSSTVHKTLGGPRSGLILAKQEFAKKINSAVFPGQQGGPLMHAIAAKAVAFKIAGTEEFRDRQQRTLSGAKILAERLTGADVADKGISVLTGGTDVHLVLVDLRNSQLDGQQGEDLLHEIGITVNRNAVPFDPRPPMVTSGLRIGTAALATRGFGDAEFTEVADIIATALAGGSDAETLRGRVRALAQRVPLYQGLEDWHLLG.

Residues Leu126 and 130-132 contribute to the (6S)-5,6,7,8-tetrahydrofolate site; that span reads GHL. Lys235 bears the N6-(pyridoxal phosphate)lysine mark.

The protein belongs to the SHMT family. As to quaternary structure, homodimer. It depends on pyridoxal 5'-phosphate as a cofactor.

Its subcellular location is the cytoplasm. The catalysed reaction is (6R)-5,10-methylene-5,6,7,8-tetrahydrofolate + glycine + H2O = (6S)-5,6,7,8-tetrahydrofolate + L-serine. It functions in the pathway one-carbon metabolism; tetrahydrofolate interconversion. Its pathway is amino-acid biosynthesis; glycine biosynthesis; glycine from L-serine: step 1/1. Its function is as follows. Catalyzes the reversible interconversion of serine and glycine with tetrahydrofolate (THF) serving as the one-carbon carrier. This reaction serves as the major source of one-carbon groups required for the biosynthesis of purines, thymidylate, methionine, and other important biomolecules. Also exhibits THF-independent aldolase activity toward beta-hydroxyamino acids, producing glycine and aldehydes, via a retro-aldol mechanism. In Nocardia farcinica (strain IFM 10152), this protein is Serine hydroxymethyltransferase.